The sequence spans 144 residues: 3-hydroxyacyl-[acyl-carrier-protein] dehydratase FabZ (144 aa).

His-48 is an active-site residue.

This sequence belongs to the thioester dehydratase family. FabZ subfamily.

It is found in the cytoplasm. It catalyses the reaction a (3R)-hydroxyacyl-[ACP] = a (2E)-enoyl-[ACP] + H2O. In terms of biological role, involved in unsaturated fatty acids biosynthesis. Catalyzes the dehydration of short chain beta-hydroxyacyl-ACPs and long chain saturated and unsaturated beta-hydroxyacyl-ACPs. This is 3-hydroxyacyl-[acyl-carrier-protein] dehydratase FabZ from Chloroflexus aggregans (strain MD-66 / DSM 9485).